A 65-amino-acid chain; its full sequence is Dybowskin-2CDYa (65 aa).

Residues 1–22 (MFTLKKSLLLLFFIGVIKLSLC) form the signal peptide. Positions 23–47 (EEERNADDDERRDDPDEMDVEVENR) are excised as a propeptide. Residues 26–43 (RNADDDERRDDPDEMDVE) are compositionally biased toward acidic residues. Residues 26 to 65 (RNADDDERRDDPDEMDVEVENRSAVGRHGRRFGLRKHRKH) form a disordered region. Residues 50–65 (VGRHGRRFGLRKHRKH) are compositionally biased toward basic residues.

Belongs to the frog skin active peptide (FSAP) family. Brevinin subfamily. Expressed by the skin glands.

The protein localises to the secreted. In terms of biological role, antimicrobial peptide. Has activity against the Gram-positive bacterium S.aureus (MIC=6 uM) and the Gram-negative bacterium E.coli (MIC=3 uM). Lacks hemolytic activity against human erythrocytes. The sequence is that of Dybowskin-2CDYa from Rana dybowskii (Dybovsky's frog).